We begin with the raw amino-acid sequence, 530 residues long: Light-independent protochlorophyllide reductase subunit B (530 aa).

Asp36 lines the [4Fe-4S] cluster pocket. The active-site Proton donor is Asp287. Residue 422–423 (GL) coordinates substrate. A disordered region spans residues 453–472 (PAVQTASSEPQPSAIETPSA). Polar residues predominate over residues 454–463 (AVQTASSEPQ).

This sequence belongs to the ChlB/BchB/BchZ family. In terms of assembly, protochlorophyllide reductase is composed of three subunits; BchL, BchN and BchB. Forms a heterotetramer of two BchB and two BchN subunits. [4Fe-4S] cluster is required as a cofactor.

It carries out the reaction chlorophyllide a + oxidized 2[4Fe-4S]-[ferredoxin] + 2 ADP + 2 phosphate = protochlorophyllide a + reduced 2[4Fe-4S]-[ferredoxin] + 2 ATP + 2 H2O. The protein operates within porphyrin-containing compound metabolism; bacteriochlorophyll biosynthesis (light-independent). Its function is as follows. Component of the dark-operative protochlorophyllide reductase (DPOR) that uses Mg-ATP and reduced ferredoxin to reduce ring D of protochlorophyllide (Pchlide) to form chlorophyllide a (Chlide). This reaction is light-independent. The NB-protein (BchN-BchB) is the catalytic component of the complex. The chain is Light-independent protochlorophyllide reductase subunit B from Rhodopseudomonas palustris (strain BisB18).